The sequence spans 115 residues: Ribonuclease P protein component (115 aa).

It belongs to the RnpA family. As to quaternary structure, consists of a catalytic RNA component (M1 or rnpB) and a protein subunit.

The enzyme catalyses Endonucleolytic cleavage of RNA, removing 5'-extranucleotides from tRNA precursor.. Functionally, RNaseP catalyzes the removal of the 5'-leader sequence from pre-tRNA to produce the mature 5'-terminus. It can also cleave other RNA substrates such as 4.5S RNA. The protein component plays an auxiliary but essential role in vivo by binding to the 5'-leader sequence and broadening the substrate specificity of the ribozyme. The polypeptide is Ribonuclease P protein component (Bacillus cereus (strain G9842)).